We begin with the raw amino-acid sequence, 59 residues long: Potassium channel toxin alpha-KTx 4.7 (59 aa).

The first 22 residues, 1–22 (MKAFYGILIIFILISMLDLSQQ), serve as a signal peptide directing secretion. Intrachain disulfides connect Cys-29–Cys-50, Cys-35–Cys-55, and Cys-39–Cys-57. The segment at 48–55 (GKCMNGKC) is interaction with Ca(2+)-activated K(+) channels.

This sequence belongs to the short scorpion toxin superfamily. Potassium channel inhibitor family. Alpha-KTx 04 subfamily. In terms of tissue distribution, expressed by the venom gland.

It is found in the secreted. Functionally, potently blocks Kv1.1/KCNA1 (85%), Kv1.2/KCNA2 (91%), Kv1.3/KCNA3 (89%), Kv1.6/KCNA6 (94%), and Shaker (97%). This chain is Potassium channel toxin alpha-KTx 4.7, found in Tityus stigmurus (Brazilian scorpion).